The sequence spans 176 residues: uncharacterized protein (176 aa).

This is an uncharacterized protein from Dictyostelium discoideum (Social amoeba).